The chain runs to 224 residues: LexA repressor (224 aa).

Residues 38 to 58 constitute a DNA-binding region (H-T-H motif); the sequence is IREIGDAVGLTSTSSVAHQLR. The segment covering 71 to 82 has biased composition (basic and acidic residues); that stretch reads NRPRAVDVRGID. Positions 71-96 are disordered; it reads NRPRAVDVRGIDDAGTPSATTDVIGS. Residues Ser148 and Lys185 each act as for autocatalytic cleavage activity in the active site.

This sequence belongs to the peptidase S24 family. In terms of assembly, homodimer.

The catalysed reaction is Hydrolysis of Ala-|-Gly bond in repressor LexA.. Represses a number of genes involved in the response to DNA damage (SOS response), including recA and lexA. In the presence of single-stranded DNA, RecA interacts with LexA causing an autocatalytic cleavage which disrupts the DNA-binding part of LexA, leading to derepression of the SOS regulon and eventually DNA repair. This Mycobacteroides abscessus (strain ATCC 19977 / DSM 44196 / CCUG 20993 / CIP 104536 / JCM 13569 / NCTC 13031 / TMC 1543 / L948) (Mycobacterium abscessus) protein is LexA repressor.